A 316-amino-acid chain; its full sequence is Ribosomal RNA small subunit methyltransferase H (316 aa).

Residues 35 to 37 (SGH), D55, F84, D105, and Q112 contribute to the S-adenosyl-L-methionine site.

It belongs to the methyltransferase superfamily. RsmH family.

The protein localises to the cytoplasm. It catalyses the reaction cytidine(1402) in 16S rRNA + S-adenosyl-L-methionine = N(4)-methylcytidine(1402) in 16S rRNA + S-adenosyl-L-homocysteine + H(+). Specifically methylates the N4 position of cytidine in position 1402 (C1402) of 16S rRNA. In Streptococcus equi subsp. equi (strain 4047), this protein is Ribosomal RNA small subunit methyltransferase H.